The chain runs to 282 residues: 4-diphosphocytidyl-2-C-methyl-D-erythritol kinase (282 aa).

The active site involves Lys12. 95 to 105 (PMGGGIGGGSS) contributes to the ATP binding site. The active site involves Asp137.

Belongs to the GHMP kinase family. IspE subfamily.

It carries out the reaction 4-CDP-2-C-methyl-D-erythritol + ATP = 4-CDP-2-C-methyl-D-erythritol 2-phosphate + ADP + H(+). It participates in isoprenoid biosynthesis; isopentenyl diphosphate biosynthesis via DXP pathway; isopentenyl diphosphate from 1-deoxy-D-xylulose 5-phosphate: step 3/6. Catalyzes the phosphorylation of the position 2 hydroxy group of 4-diphosphocytidyl-2C-methyl-D-erythritol. This chain is 4-diphosphocytidyl-2-C-methyl-D-erythritol kinase, found in Pseudomonas aeruginosa (strain LESB58).